Reading from the N-terminus, the 216-residue chain is Probable GTP-binding protein EngB (216 aa).

Residues 37–214 enclose the EngB-type G domain; it reads QGLEVAFAGR…RAAIIKLVAE (178 aa). GTP is bound by residues 45-52, 72-76, 92-95, 159-162, and 193-195; these read GRSNVGKS, GRTQE, DMPG, TKAD, and TSS. Mg(2+) contacts are provided by Ser-52 and Thr-74.

This sequence belongs to the TRAFAC class TrmE-Era-EngA-EngB-Septin-like GTPase superfamily. EngB GTPase family. It depends on Mg(2+) as a cofactor.

Its function is as follows. Necessary for normal cell division and for the maintenance of normal septation. This is Probable GTP-binding protein EngB from Rhodopseudomonas palustris (strain BisA53).